The following is a 134-amino-acid chain: ATP synthase epsilon chain, chloroplastic (134 aa).

The protein belongs to the ATPase epsilon chain family. In terms of assembly, F-type ATPases have 2 components, CF(1) - the catalytic core - and CF(0) - the membrane proton channel. CF(1) has five subunits: alpha(3), beta(3), gamma(1), delta(1), epsilon(1). CF(0) has three main subunits: a, b and c.

The protein localises to the plastid. It localises to the chloroplast thylakoid membrane. In terms of biological role, produces ATP from ADP in the presence of a proton gradient across the membrane. The polypeptide is ATP synthase epsilon chain, chloroplastic (Drimys granadensis).